The sequence spans 310 residues: MLNSWPLAKDLQVLVEIVHSGSFSAAAATLGQTPAFVTKRIQILENTLATTLLNRSARGVALTESGQRCYEHALEILTQYQRLVDDVTQIKTRPEGMIRIGCSFGFGRSHIAPAITELMRNYPELQVHFELFDRQIDLVQDNIDLDIRINDEIPDYYIAHLLTKNKRILCAAPEYLQKYPQPQSLQELSRHDCLVTKERDMTHGIWELGNGQEKKSVKVSGHLSSNSGEIVLQWALEGKGIMLRSEWDVLPFLESGKLVQVLPEYAQSANIWAVYREPLYRSMKLRVCVEFLAAWCQQRLGKPDEGYQVM.

The HTH lysR-type domain occupies proline 6 to threonine 63. Residues phenylalanine 23–glutamine 42 constitute a DNA-binding region (H-T-H motif).

It belongs to the LysR transcriptional regulatory family.

In terms of biological role, positive regulator required for L-tartrate-dependent anaerobic growth on glycerol. Induces expression of the ttdA-ttdB-ygjE operon. This Escherichia coli (strain K12) protein is HTH-type transcriptional activator TtdR (ttdR).